The following is a 319-amino-acid chain: MNERKYAILGTGALGGYYGAKLQKAGSDVHFLLKSDYEKVNQDGLLVESKDGDFTLPQVNAYNDVAKMPKCDVVVVALKTTQNHLLPKLLPPIVKNDGIVLVLQNGLGVEEEIAEILPQVHIIGGLCFLCSNKVGAGYIHHLDYGQITLGEYAHGYSNMGITDRMQQISHDFQTAGISIELLEDLLLGRWKKLVWNIPYNGLSVVLNARTDELMADTYTRTLVEQLMYEVKAGAKSMGRNIPDSFIQTMLDYTVKMKPYRTSMKIDYDECRPLEVEAIVGNPLHKAQEVGVNLPQINCLYHQLKFLDGRNRTGQLTVDS.

Residues 10-15 (GTGALG) and Asn-105 each bind NADP(+). Residue Asn-105 participates in substrate binding. Lys-192 serves as the catalytic Proton donor. Substrate contacts are provided by Asn-196, Asn-200, and Ser-262. Glu-274 contributes to the NADP(+) binding site.

This sequence belongs to the ketopantoate reductase family.

Its subcellular location is the cytoplasm. It catalyses the reaction (R)-pantoate + NADP(+) = 2-dehydropantoate + NADPH + H(+). It functions in the pathway cofactor biosynthesis; (R)-pantothenate biosynthesis; (R)-pantoate from 3-methyl-2-oxobutanoate: step 2/2. In terms of biological role, catalyzes the NADPH-dependent reduction of ketopantoate into pantoic acid. This is 2-dehydropantoate 2-reductase from Nostoc sp. (strain PCC 7120 / SAG 25.82 / UTEX 2576).